We begin with the raw amino-acid sequence, 106 residues long: Phosphoribosyl-ATP pyrophosphatase (106 aa).

The protein belongs to the PRA-PH family.

The protein resides in the cytoplasm. It carries out the reaction 1-(5-phospho-beta-D-ribosyl)-ATP + H2O = 1-(5-phospho-beta-D-ribosyl)-5'-AMP + diphosphate + H(+). The protein operates within amino-acid biosynthesis; L-histidine biosynthesis; L-histidine from 5-phospho-alpha-D-ribose 1-diphosphate: step 2/9. In Geotalea daltonii (strain DSM 22248 / JCM 15807 / FRC-32) (Geobacter daltonii), this protein is Phosphoribosyl-ATP pyrophosphatase.